A 130-amino-acid chain; its full sequence is Large ribosomal subunit protein bL19 (130 aa).

The protein belongs to the bacterial ribosomal protein bL19 family.

Functionally, this protein is located at the 30S-50S ribosomal subunit interface and may play a role in the structure and function of the aminoacyl-tRNA binding site. The sequence is that of Large ribosomal subunit protein bL19 from Mycoplasma mycoides subsp. mycoides SC (strain CCUG 32753 / NCTC 10114 / PG1).